The following is a 573-amino-acid chain: Hemagglutinin-neuraminidase (573 aa).

Topologically, residues 1–27 (MQDSHGNTQILNQANSMVKRTWRLLFR) are intravirion. Residues 28 to 48 (IATLILLVSIFVLSLIIVLQS) form a helical membrane-spanning segment. Residues 49–573 (TPGNLQNDIN…DFQITLFLAA (525 aa)) lie on the Virion surface side of the membrane. Disulfide bonds link Cys-173/Cys-197, Cys-187/Cys-248, and Cys-239/Cys-252. Positions 235-240 (NRKSCS) are involved in neuraminidase activity. N-linked (GlcNAc...) asparagine; by host glycans are attached at residues Asn-258, Asn-330, Asn-339, and Asn-347. 3 disulfide bridges follow: Cys-345-Cys-466, Cys-377-Cys-387, and Cys-460-Cys-470. Asn-433 is a glycosylation site (N-linked (GlcNAc...) asparagine; by host). 2 N-linked (GlcNAc...) asparagine; by host glycosylation sites follow: Asn-502 and Asn-530. A disulfide bond links Cys-540 and Cys-551.

It belongs to the paramyxoviruses hemagglutinin-neuraminidase family. As to quaternary structure, homotetramer; composed of disulfide-linked homodimers. Interacts with F protein trimer.

It is found in the virion membrane. The protein resides in the host cell membrane. The catalysed reaction is Hydrolysis of alpha-(2-&gt;3)-, alpha-(2-&gt;6)-, alpha-(2-&gt;8)- glycosidic linkages of terminal sialic acid residues in oligosaccharides, glycoproteins, glycolipids, colominic acid and synthetic substrates.. In terms of biological role, attaches the virus to sialic acid-containing cell receptors and thereby initiating infection. Binding of HN protein to the receptor induces a conformational change that allows the F protein to trigger virion/cell membranes fusion. Its function is as follows. Neuraminidase activity ensures the efficient spread of the virus by dissociating the mature virions from the neuraminic acid containing glycoproteins. In Homo sapiens (Human), this protein is Hemagglutinin-neuraminidase (HN).